A 297-amino-acid polypeptide reads, in one-letter code: Palmitoyl-protein thioesterase ABHD10, mitochondrial (297 aa).

A mitochondrion-targeting transit peptide spans 1–43; the sequence is MAAWVPCRKWGWAAVSFGRHRGLIASLARKPPWAWWLSACRQK. The AB hydrolase-1 domain maps to 69–181; sequence IIFIPGYLSN…GVVTQFHSLP (113 aa). Residues Ser-143, Asp-240, and His-270 each act as charge relay system in the active site.

Belongs to the AB hydrolase superfamily. Expressed in epididymal sperm but not in testicular sperm (at protein level).

The protein resides in the mitochondrion. It carries out the reaction S-hexadecanoyl-L-cysteinyl-[protein] + H2O = L-cysteinyl-[protein] + hexadecanoate + H(+). The catalysed reaction is mycophenolic acid O-acyl-beta-D-glucuronide + H2O = mycophenolate + D-glucuronate + H(+). Inhibited by palmostatin-B. Functionally, acts as an acyl-protein thioesterase that hydrolyzes fatty acids from acylated residues in proteins. Regulates the mitochondrial S-depalmitoylation of the nucleophilic active site residue of peroxiredoxin-5/PRDX5, a key antioxidant protein, therefore modulating mitochondrial antioxidant ability. Also catalyzes the deglucuronidation of mycophenolic acid acyl-glucuronide, an active metabolite of the immunosuppressant drug mycophenolate. In Rattus norvegicus (Rat), this protein is Palmitoyl-protein thioesterase ABHD10, mitochondrial.